A 761-amino-acid polypeptide reads, in one-letter code: Xaa-Pro dipeptidyl-peptidase (761 aa).

Active-site charge relay system residues include Ser-347, Asp-467, and His-497.

The protein belongs to the peptidase S15 family. In terms of assembly, homodimer.

It is found in the cytoplasm. It carries out the reaction Hydrolyzes Xaa-Pro-|- bonds to release unblocked, N-terminal dipeptides from substrates including Ala-Pro-|-p-nitroanilide and (sequentially) Tyr-Pro-|-Phe-Pro-|-Gly-Pro-|-Ile.. Removes N-terminal dipeptides sequentially from polypeptides having unsubstituted N-termini provided that the penultimate residue is proline. This chain is Xaa-Pro dipeptidyl-peptidase, found in Streptococcus agalactiae serotype Ia (strain ATCC 27591 / A909 / CDC SS700).